Consider the following 419-residue polypeptide: Arginine biosynthesis bifunctional protein ArgJ (419 aa).

Residues Thr154, Lys180, Thr191, Glu277, Asn414, and Thr419 each contribute to the substrate site. Thr191 (nucleophile) is an active-site residue.

The protein belongs to the ArgJ family. As to quaternary structure, heterotetramer of two alpha and two beta chains.

The protein localises to the cytoplasm. It carries out the reaction N(2)-acetyl-L-ornithine + L-glutamate = N-acetyl-L-glutamate + L-ornithine. The catalysed reaction is L-glutamate + acetyl-CoA = N-acetyl-L-glutamate + CoA + H(+). It participates in amino-acid biosynthesis; L-arginine biosynthesis; L-ornithine and N-acetyl-L-glutamate from L-glutamate and N(2)-acetyl-L-ornithine (cyclic): step 1/1. Its pathway is amino-acid biosynthesis; L-arginine biosynthesis; N(2)-acetyl-L-ornithine from L-glutamate: step 1/4. Its function is as follows. Catalyzes two activities which are involved in the cyclic version of arginine biosynthesis: the synthesis of N-acetylglutamate from glutamate and acetyl-CoA as the acetyl donor, and of ornithine by transacetylation between N(2)-acetylornithine and glutamate. This chain is Arginine biosynthesis bifunctional protein ArgJ, found in Thermosynechococcus vestitus (strain NIES-2133 / IAM M-273 / BP-1).